Here is a 367-residue protein sequence, read N- to C-terminus: Phosphoribosylaminoimidazole-succinocarboxamide synthase (367 aa).

The protein belongs to the SAICAR synthetase family.

The enzyme catalyses 5-amino-1-(5-phospho-D-ribosyl)imidazole-4-carboxylate + L-aspartate + ATP = (2S)-2-[5-amino-1-(5-phospho-beta-D-ribosyl)imidazole-4-carboxamido]succinate + ADP + phosphate + 2 H(+). Its pathway is purine metabolism; IMP biosynthesis via de novo pathway; 5-amino-1-(5-phospho-D-ribosyl)imidazole-4-carboxamide from 5-amino-1-(5-phospho-D-ribosyl)imidazole-4-carboxylate: step 1/2. The polypeptide is Phosphoribosylaminoimidazole-succinocarboxamide synthase (Vibrio campbellii (strain ATCC BAA-1116)).